An 85-amino-acid chain; its full sequence is Phosphocarrier protein HPr (85 aa).

The HPr domain maps to 1-85; it reads MFQQEVTITA…HLVKLMAELE (85 aa). Histidine 15 (pros-phosphohistidine intermediate) is an active-site residue.

It is found in the cytoplasm. General (non sugar-specific) component of the phosphoenolpyruvate-dependent sugar phosphotransferase system (sugar PTS). This major carbohydrate active-transport system catalyzes the phosphorylation of incoming sugar substrates concomitantly with their translocation across the cell membrane. The phosphoryl group from phosphoenolpyruvate (PEP) is transferred to the phosphoryl carrier protein HPr by enzyme I. Phospho-HPr then transfers it to the PTS EIIA domain. The polypeptide is Phosphocarrier protein HPr (ptsH) (Klebsiella pneumoniae).